A 253-amino-acid chain; its full sequence is Solute carrier family 66 member 2 (253 aa).

The next 6 helical transmembrane spans lie at 7–27 (GWLLVPLHQLVSWGAAGAMVF), 49–69 (FSTYVCLVLLVANILRILFWF), 72–92 (HFESPLLWQSVVMILTMLLML), 125–145 (FADYVQCVLAFTGVAGYITYL), 150–170 (ALFVETLGFLAVLTEAMLGVP), and 214–234 (VCGLLQVLVDLAILGQAYVFT). The PQ-loop 1 domain maps to 14-80 (HQLVSWGAAG…RHFESPLLWQ (67 aa)). The PQ-loop 2 domain maps to 160-215 (AVLTEAMLGVPQLYRNHRHQSTEGMSIKMVLMWTSGDTFKTAYFLLNGAPLQFSVC).

It is found in the membrane. This is Solute carrier family 66 member 2 (SLC66A2) from Bos taurus (Bovine).